Reading from the N-terminus, the 367-residue chain is Chorismate synthase (367 aa).

Arg-48 contacts NADP(+). Residues 125-127 (RSS), Gly-283, 298-302 (KPTPS), and Arg-324 each bind FMN.

The protein belongs to the chorismate synthase family. In terms of assembly, homotetramer. FMNH2 is required as a cofactor.

It carries out the reaction 5-O-(1-carboxyvinyl)-3-phosphoshikimate = chorismate + phosphate. It functions in the pathway metabolic intermediate biosynthesis; chorismate biosynthesis; chorismate from D-erythrose 4-phosphate and phosphoenolpyruvate: step 7/7. Catalyzes the anti-1,4-elimination of the C-3 phosphate and the C-6 proR hydrogen from 5-enolpyruvylshikimate-3-phosphate (EPSP) to yield chorismate, which is the branch point compound that serves as the starting substrate for the three terminal pathways of aromatic amino acid biosynthesis. This reaction introduces a second double bond into the aromatic ring system. The sequence is that of Chorismate synthase from Agathobacter rectalis (strain ATCC 33656 / DSM 3377 / JCM 17463 / KCTC 5835 / VPI 0990) (Eubacterium rectale).